A 131-amino-acid polypeptide reads, in one-letter code: Binder of sperm protein homolog 2 (131 aa).

An N-terminal signal peptide occupies residues 1-22 (MEVMSHLVHWVFLAVYMYELNA). 2 Fibronectin type-II domains span residues 35 to 79 (ISTD…YCTA) and 80 to 128 (QDPP…QCSP). Intrachain disulfides connect C40–C64, C54–C77, C85–C111, and C99–C126.

The protein belongs to the seminal plasma protein family. In terms of tissue distribution, epididymis.

Its subcellular location is the secreted. Functionally, binds sperm in vitro but has no effect on sperm capacitation. Also binds gelatin and heparin, but not chondroitin sulfate B or phospholipid liposomes. This is Binder of sperm protein homolog 2 from Mus musculus (Mouse).